The chain runs to 122 residues: Large ribosomal subunit protein eL18 (122 aa).

This sequence belongs to the eukaryotic ribosomal protein eL18 family.

In Pyrobaculum aerophilum (strain ATCC 51768 / DSM 7523 / JCM 9630 / CIP 104966 / NBRC 100827 / IM2), this protein is Large ribosomal subunit protein eL18.